Consider the following 97-residue polypeptide: Defensin-like protein 301 (97 aa).

A signal peptide spans 1–24 (MEKVTSIFFVLLLISSCLILRSQG). Intrachain disulfides connect Cys-28–Cys-47, Cys-34–Cys-53, Cys-39–Cys-55, Cys-65–Cys-84, Cys-71–Cys-92, and Cys-76–Cys-94.

It belongs to the DEFL family.

Its subcellular location is the secreted. This Arabidopsis thaliana (Mouse-ear cress) protein is Defensin-like protein 301.